A 258-amino-acid chain; its full sequence is Thiazole synthase 1 (258 aa).

Lysine 97 (schiff-base intermediate with DXP) is an active-site residue. Residues glycine 158, 184-185, and 206-207 each bind 1-deoxy-D-xylulose 5-phosphate; these read AG and NT.

The protein belongs to the ThiG family. In terms of assembly, homotetramer. Forms heterodimers with either ThiH or ThiS.

The protein resides in the cytoplasm. It catalyses the reaction [ThiS sulfur-carrier protein]-C-terminal-Gly-aminoethanethioate + 2-iminoacetate + 1-deoxy-D-xylulose 5-phosphate = [ThiS sulfur-carrier protein]-C-terminal Gly-Gly + 2-[(2R,5Z)-2-carboxy-4-methylthiazol-5(2H)-ylidene]ethyl phosphate + 2 H2O + H(+). The protein operates within cofactor biosynthesis; thiamine diphosphate biosynthesis. Functionally, catalyzes the rearrangement of 1-deoxy-D-xylulose 5-phosphate (DXP) to produce the thiazole phosphate moiety of thiamine. Sulfur is provided by the thiocarboxylate moiety of the carrier protein ThiS. In vitro, sulfur can be provided by H(2)S. The sequence is that of Thiazole synthase 1 from Syntrophotalea carbinolica (strain DSM 2380 / NBRC 103641 / GraBd1) (Pelobacter carbinolicus).